Consider the following 110-residue polypeptide: U1-lycotoxin-Ls1aa (110 aa).

An N-terminal signal peptide occupies residues 1–20 (MKFVLLFGVLLVTLFSYSSA). The propeptide occupies 21 to 44 (EMLDDFDQADEDELLSLIEKEEAR). 4 disulfide bridges follow: cysteine 47–cysteine 62, cysteine 54–cysteine 71, cysteine 61–cysteine 89, and cysteine 73–cysteine 87.

The protein belongs to the neurotoxin 19 (CSTX) family. 03 subfamily. In terms of tissue distribution, expressed by the venom gland.

It localises to the secreted. The chain is U1-lycotoxin-Ls1aa from Lycosa singoriensis (Wolf spider).